Here is a 214-residue protein sequence, read N- to C-terminus: Probable transaldolase (214 aa).

Lys83 acts as the Schiff-base intermediate with substrate in catalysis.

The protein belongs to the transaldolase family. Type 3B subfamily.

The protein localises to the cytoplasm. It carries out the reaction D-sedoheptulose 7-phosphate + D-glyceraldehyde 3-phosphate = D-erythrose 4-phosphate + beta-D-fructose 6-phosphate. Its pathway is carbohydrate degradation; pentose phosphate pathway; D-glyceraldehyde 3-phosphate and beta-D-fructose 6-phosphate from D-ribose 5-phosphate and D-xylulose 5-phosphate (non-oxidative stage): step 2/3. Transaldolase is important for the balance of metabolites in the pentose-phosphate pathway. In Geobacter sulfurreducens (strain ATCC 51573 / DSM 12127 / PCA), this protein is Probable transaldolase.